Consider the following 197-residue polypeptide: ATP synthase subunit delta', mitochondrial (197 aa).

A mitochondrion-targeting transit peptide spans 1-19; it reads MFRRATSTFLSRASATRRF.

It belongs to the ATPase epsilon chain family. As to quaternary structure, F-type ATPases have 2 components, CF(1) - the catalytic core - and CF(0) - the membrane proton channel. CF(1) has five subunits: alpha(3), beta(3), gamma(1), delta(1), epsilon(1). CF(0) has three main subunits: a, b and c.

The protein localises to the mitochondrion. Its subcellular location is the mitochondrion inner membrane. Its function is as follows. Mitochondrial membrane ATP synthase (F(1)F(0) ATP synthase or Complex V) produces ATP from ADP in the presence of a proton gradient across the membrane which is generated by electron transport complexes of the respiratory chain. F-type ATPases consist of two structural domains, F(1) - containing the extramembraneous catalytic core, and F(0) - containing the membrane proton channel, linked together by a central stalk and a peripheral stalk. During catalysis, ATP turnover in the catalytic domain of F(1) is coupled via a rotary mechanism of the central stalk subunits to proton translocation. Part of the complex F(1) domain and of the central stalk which is part of the complex rotary element. Rotation of the central stalk against the surrounding alpha(3)beta(3) subunits leads to hydrolysis of ATP in three separate catalytic sites on the beta subunits. This is ATP synthase subunit delta', mitochondrial from Pisum sativum (Garden pea).